The chain runs to 452 residues: Probable diguanylate cyclase DgcT (452 aa).

The Cytoplasmic portion of the chain corresponds to 1-7 (MEKDYLR). The helical transmembrane segment at 8–28 (ISSTVLVSLLFGLALVLVNSW) threads the bilayer. The Periplasmic portion of the chain corresponds to 29–45 (FNQPGVEEVVPRSTYLM). Residues 46-66 (VMIALFFIDTVAFIFMQLYFI) traverse the membrane as a helical segment. Over 67–74 (YDRRQFSN) the chain is Cytoplasmic. Residues 75–95 (CVLSLAFLSCLIYFVITVIII) form a helical membrane-spanning segment. Over 96 to 111 (QQIIEERLTSSVVQND) the chain is Periplasmic. Residues 112–132 (IAIYYLFRQMSLCILIFLALV) form a helical membrane-spanning segment. At 133-148 (NKVSENTKQRNLFSKK) the chain is on the cytoplasmic side. Residues 149–169 (MTLCISLFFVFGGPIVAHILS) traverse the membrane as a helical segment. The Periplasmic segment spans residues 170 to 195 (SHYESYNLHIAELTNENGQVVWKASY). The chain crosses the membrane as a helical span at residues 196–216 (VTIMIFMWLTLLSVNLYFNGL). The Cytoplasmic portion of the chain corresponds to 217–219 (RYD). The chain crosses the membrane as a helical span at residues 220–240 (IWNGVTVIAFCAVLYNISLLF). The Periplasmic segment spans residues 241-254 (MSRYSVSTWYISRT). The chain crosses the membrane as a helical span at residues 255–275 (IEVVSKLTVMVIFMCHIFSAL). Topologically, residues 276-452 (RVTKNIAHRD…RDVVNFCESP (177 aa)) are cytoplasmic. In terms of domain architecture, GGDEF spans 310–445 (TPYCVMIMDI…GRNKVVVRDV (136 aa)). Mg(2+) contacts are provided by D318 and I319. Residues N326, H331, and D335 each contribute to the substrate site. E361 is a binding site for Mg(2+). E361 functions as the Proton acceptor in the catalytic mechanism. Substrate is bound at residue R381.

As to quaternary structure, homodimer. The cofactor is Mg(2+).

The protein localises to the cell inner membrane. The catalysed reaction is 2 GTP = 3',3'-c-di-GMP + 2 diphosphate. It functions in the pathway purine metabolism; 3',5'-cyclic di-GMP biosynthesis. Functionally, probably catalyzes the synthesis of cyclic-di-GMP (c-di-GMP) via the condensation of 2 GTP molecules. Overexpression leads to a strong repression of swimming; swimming returns to normal when residues 359-360 are both mutated to Ala. Overexpression also leads to a 20-fold increase in c-di-GMP levels in vivo. Cyclic-di-GMP is a second messenger which controls cell surface-associated traits in bacteria. The polypeptide is Probable diguanylate cyclase DgcT (Escherichia coli (strain K12)).